A 229-amino-acid polypeptide reads, in one-letter code: Germin-like protein 2-4 (229 aa).

The first 23 residues, 1–23, serve as a signal peptide directing secretion; sequence MAHRRRCLLLLLAVLLPAMAARG. Cysteine 32 and cysteine 52 form a disulfide bridge. Asparagine 57 is a glycosylation site (N-linked (GlcNAc...) asparagine). The region spanning 66 to 213 is the Cupin type-1 domain; it reads SGVRAAGNFS…AFGLTPAELR (148 aa). Mn(2+)-binding residues include histidine 115, histidine 117, glutamate 122, and histidine 161.

It belongs to the germin family. In terms of assembly, oligomer (believed to be a pentamer but probably hexamer).

The protein localises to the secreted. It is found in the extracellular space. The protein resides in the apoplast. Functionally, may play a role in plant defense. Probably has no oxalate oxidase activity even if the active site is conserved. This Oryza sativa subsp. japonica (Rice) protein is Germin-like protein 2-4.